We begin with the raw amino-acid sequence, 713 residues long: Mitochondrial intermediate peptidase (713 aa).

A mitochondrion-targeting transit peptide spans 1–35 (MLCVGRLGGLGARAAALPPRRAGRGSLEAGIRARR). Lysine 126 is subject to N6-acetyllysine. Histidine 495 contacts Zn(2+). Glutamate 496 is a catalytic residue. Positions 499 and 502 each coordinate Zn(2+).

It belongs to the peptidase M3 family. In terms of assembly, monomer. Zn(2+) is required as a cofactor.

The protein localises to the mitochondrion matrix. It carries out the reaction Release of an N-terminal octapeptide as second stage of processing of some proteins imported into the mitochondrion.. Activity is divalent cation-dependent. It is stimulated by manganese, magnesium or calcium ions and reversibly inhibited by zinc, cobalt and iron. In terms of biological role, cleaves proteins, imported into the mitochondrion, to their mature size. This is Mitochondrial intermediate peptidase (MIPEP) from Homo sapiens (Human).